The chain runs to 235 residues: Post-translational flagellin modification protein B (235 aa).

This sequence belongs to the CMP-NeuNAc synthase family.

Functionally, required for biosynthesis of LAH modification in the post-translational modification of Campylobacter coli flagellin. The protein is Post-translational flagellin modification protein B (ptmB) of Campylobacter coli.